Here is a 122-residue protein sequence, read N- to C-terminus: Large ribosomal subunit protein uL14 (122 aa).

The protein belongs to the universal ribosomal protein uL14 family. In terms of assembly, part of the 50S ribosomal subunit. Forms a cluster with proteins L3 and L19. In the 70S ribosome, L14 and L19 interact and together make contacts with the 16S rRNA in bridges B5 and B8.

Binds to 23S rRNA. Forms part of two intersubunit bridges in the 70S ribosome. In Geobacillus sp. (strain WCH70), this protein is Large ribosomal subunit protein uL14.